The primary structure comprises 414 residues: Isocitrate dehydrogenase [NADP] cytoplasmic (414 aa).

An N-acetylserine modification is found at Ser2. At Tyr42 the chain carries Phosphotyrosine. NADP(+) is bound at residue 75–77 (TIT). Thr77 is a binding site for substrate. Lys81 bears the N6-acetyllysine mark. NADP(+) is bound at residue Arg82. Residues 94–100 (SPNGTIR) and Arg109 contribute to the substrate site. Lys126 carries the post-translational modification N6-succinyllysine. Arg132 and Lys212 together coordinate substrate. 3 positions are modified to N6-acetyllysine: Lys224, Lys233, and Lys243. Asp252 serves as a coordination point for Mn(2+). An NADP(+)-binding site is contributed by Lys260. Mn(2+) is bound by residues Asp275 and Asp279. Position 310–315 (310–315 (GTVTRH)) interacts with NADP(+). Position 321 is an N6-acetyllysine (Lys321). Residue Asn328 coordinates NADP(+). At Ser389 the chain carries Phosphoserine. Lys400 is subject to N6-succinyllysine.

It belongs to the isocitrate and isopropylmalate dehydrogenases family. In terms of assembly, homodimer. Mg(2+) serves as cofactor. Requires Mn(2+) as cofactor. In terms of processing, the N-terminus is blocked. Post-translationally, acetylation at Lys-374 dramatically reduces catalytic activity. Ubiquitous.

The protein localises to the cytoplasm. Its subcellular location is the cytosol. It is found in the peroxisome. It catalyses the reaction D-threo-isocitrate + NADP(+) = 2-oxoglutarate + CO2 + NADPH. Functionally, catalyzes the NADP(+)-dependent oxidative decarboxylation of isocitrate (D-threo-isocitrate) to 2-ketoglutarate (2-oxoglutarate), which is required by other enzymes such as the phytanoyl-CoA dioxygenase. Plays a critical role in the generation of NADPH, an important cofactor in many biosynthesis pathways. May act as a corneal epithelial crystallin and may be involved in maintaining corneal epithelial transparency. The sequence is that of Isocitrate dehydrogenase [NADP] cytoplasmic (Idh1) from Rattus norvegicus (Rat).